The sequence spans 402 residues: MENSSSETLHVEDLQTEIMSWLPLKSLLRFVIVSKKWASIIRGEQFKALYLRRSMTRPRLMFMVRRIATLPPEPEMVWFQSFCKEERCIPGQLEVEFLFHSVYQEKIPYFSSGQQQLRVPPNTNYTSVSQPIGGLICLQSETKFALCNPGTKKSRALPDIQAHEKAFITSFLGYDEATNVFKVLCLTMVWAHEPSKRVYEYQVLTVESGVESCSWRGITCKEKDHTPETQGLCKGGVLYYGARSTSDHRPLVMSFNVRSQEFTAIELPDQLHISYFWNFVIYNGDIALVNESDFDPRVVNEPNGNKVFHIWVRDATAQEWQRTRIEIPRWEQNVGHVDYVFRGTTGTKELVFAQDSRHCEDDFFVLYYDTFTKDLRRFQIGVTGPKISVRTCLDHVDSLWLM.

Residues 4–52 (SSSETLHVEDLQTEIMSWLPLKSLLRFVIVSKKWASIIRGEQFKALYLR) form the F-box domain.

The chain is Putative F-box protein At1g70970 from Arabidopsis thaliana (Mouse-ear cress).